Consider the following 149-residue polypeptide: Large ribosomal subunit protein bL20m (149 aa).

The N-terminal 9 residues, 1–9 (MVFLTAQLW), are a transit peptide targeting the mitochondrion.

This sequence belongs to the bacterial ribosomal protein bL20 family. Component of the mitochondrial large ribosomal subunit (mt-LSU). Mature mammalian 55S mitochondrial ribosomes consist of a small (28S) and a large (39S) subunit. The 28S small subunit contains a 12S ribosomal RNA (12S mt-rRNA) and 30 different proteins. The 39S large subunit contains a 16S rRNA (16S mt-rRNA), a copy of mitochondrial valine transfer RNA (mt-tRNA(Val)), which plays an integral structural role, and 52 different proteins. Interacts with OXA1L.

The protein localises to the mitochondrion. The chain is Large ribosomal subunit protein bL20m (MRPL20) from Homo sapiens (Human).